The sequence spans 167 residues: cAMP-dependent protein kinase type I-alpha regulatory subunit (167 aa).

Thr12 carries the phosphothreonine modification. 2 positions are modified to phosphoserine: Ser14 and Ser20. The Pseudophosphorylation motif signature appears at 30-33; the sequence is RGAI. At Ser34 the chain carries Phosphoserine. Residues 51 to 78, 79 to 167, Glu147, and Arg156 each bind 3',5'-cyclic AMP; these read LFSH…SKVS and ILES…ILKR. Ser82 is modified (phosphoserine).

Belongs to the cAMP-dependent kinase regulatory chain family. The inactive holoenzyme is composed of two regulatory chains and two catalytic chains. Activation by cAMP releases the two active catalytic monomers and the regulatory dimer. Interacts with PRKACA and PRKACB. PRKAR1A also interacts with RFC2; the complex may be involved in cell survival. Interacts with AKAP4. Interacts with RARA; the interaction occurs in the presence of cAMP or FSH and regulates RARA transcriptional activity. Interacts with the phosphorylated form of PJA2. Interacts with CBFA2T3. Interacts with PRKX; regulates this cAMP-dependent protein kinase. Interacts with smAKAP; this interaction may target PRKAR1A to the plasma membrane. Interacts with AICDA. Post-translationally, the pseudophosphorylation site binds to the substrate-binding region of the catalytic chain, resulting in the inhibition of its activity.

The protein localises to the cell membrane. In terms of biological role, regulatory subunit of the cAMP-dependent protein kinases involved in cAMP signaling in cells. In Mesocricetus auratus (Golden hamster), this protein is cAMP-dependent protein kinase type I-alpha regulatory subunit.